A 295-amino-acid polypeptide reads, in one-letter code: MPVDTLTPGARDTPALPIRLRTKVPGYLLRRPADGGARKPSAVERLEADKAKYVKSLHVANTRQEPVQPLLCKQPLFSPGTRRTVLTPSRRALPGPGCRPQLDLDILSSLINLCDSPVSPAEASRTPGRAEGARQPPLATPPRPPPSIAAVRRVDVLPLPASPIQPCPSPGPAAASSPVRPPGLQRSKSDLSERFSRAAADLERFFNFCGLDPEEARGLGVAHLARASSDIVSLAGPSAGPASSEGGCSRRSSVTVEERARERVPYGVSVIERNARVIKWLYGLRQARETPAAEC.

Disordered regions lie at residues 117–148 (PVSP…PPSI) and 160–191 (PASP…KSDL). 2 stretches are compositionally biased toward pro residues: residues 138 to 147 (LATPPRPPPS) and 160 to 171 (PASPIQPCPSPG).

Belongs to the FAM110 family. May interact with CSPP1.

It is found in the cytoplasm. It localises to the cytoskeleton. The protein localises to the microtubule organizing center. The protein resides in the centrosome. Its subcellular location is the spindle pole. The chain is Protein FAM110A (FAM110A) from Bos taurus (Bovine).